The primary structure comprises 441 residues: MNKSKTFGKIKKRIEEAKNKWARLSKADYSYNESARLATDALLDGGVEDYQKVLSEEGEVDLLSGDELQYILKNIKAPLYSNDNQTEGENGSAANGNKSESYYPMNSDSEPVPTLHNWSAEEKPYLKDKSSATVYFQADKTNNVRETIRRCINKTTQALAILMDEFTDAEIFCDVLEAANKRNIFVYLLLDANKLHLFIQMCEKLQVRDLHMTNISVRSVTGDVYCAKSGKKFAGQINEKFIISDWRFVLSGTYSFTWLSGQVHRNFLYKFSGDVVELFDEEFRNLYASSKPVMGLKSPAPMAPVLRREDSGMSIMSDSNPESINTTSEPFSSISTASISNDSQRPKSPVSTTPVPSPPSSPVKSPLQRVNSFHGYSSLISPPPQINYQSNYYQRNYAPDPPSFFYNNNANFYRSFRMRQEDFSMPRFNQGWRLFSRATMT.

Disordered stretches follow at residues 81–108 and 312–368; these read SNDN…MNSD and GMSI…SPLQ. Polar residues predominate over residues 314–327; it reads SIMSDSNPESINTT. The span at 328–354 shows a compositional bias: low complexity; that stretch reads SEPFSSISTASISNDSQRPKSPVSTTP.

Belongs to the FAM83 family.

The protein localises to the cytoplasm. Its function is as follows. May function in the epidermal growth factor receptor/EGFR signaling pathway. This Xenopus tropicalis (Western clawed frog) protein is Protein FAM83A.